Here is a 224-residue protein sequence, read N- to C-terminus: Germin-like protein 8-8 (224 aa).

The first 22 residues, 1–22 (MASPSFCLLAALLALVSWQAIA), serve as a signal peptide directing secretion. Cys32 and Cys47 form a disulfide bridge. Residues 62–212 (AMLDTPRKTN…AFQVEKGTID (151 aa)) form the Cupin type-1 domain. A glycan (N-linked (GlcNAc...) asparagine) is linked at Asn76. Residues His109, His111, and Glu116 each coordinate Mn(2+). Residue Asn135 is glycosylated (N-linked (GlcNAc...) asparagine). His157 provides a ligand contact to Mn(2+).

It belongs to the germin family. As to quaternary structure, oligomer (believed to be a pentamer but probably hexamer).

The protein resides in the secreted. Its subcellular location is the extracellular space. It localises to the apoplast. In terms of biological role, plays a role in broad-spectrum disease resistance. Probably has no oxalate oxidase activity even if the active site is conserved. This chain is Germin-like protein 8-8, found in Oryza sativa subsp. japonica (Rice).